The following is a 78-amino-acid chain: Acyl carrier protein AcpP (78 aa).

One can recognise a Carrier domain in the interval 2–77 (SDTAERVKKI…DAVKYIDKAS (76 aa)). An O-(pantetheine 4'-phosphoryl)serine modification is found at serine 37.

The protein belongs to the acyl carrier protein (ACP) family. Post-translationally, 4'-phosphopantetheine is transferred from CoA to a specific serine of apo-ACP by AcpS. This modification is essential for activity because fatty acids are bound in thioester linkage to the sulfhydryl of the prosthetic group.

Its subcellular location is the cytoplasm. It functions in the pathway lipid metabolism; fatty acid biosynthesis. In terms of biological role, carrier of the growing fatty acid chain in fatty acid biosynthesis. In Mesorhizobium japonicum (strain LMG 29417 / CECT 9101 / MAFF 303099) (Mesorhizobium loti (strain MAFF 303099)), this protein is Acyl carrier protein AcpP.